Reading from the N-terminus, the 259-residue chain is 5'-nucleotidase SurE (259 aa).

Residues D8, D9, S41, and N93 each coordinate a divalent metal cation.

It belongs to the SurE nucleotidase family. It depends on a divalent metal cation as a cofactor.

The protein resides in the cytoplasm. The catalysed reaction is a ribonucleoside 5'-phosphate + H2O = a ribonucleoside + phosphate. In terms of biological role, nucleotidase that shows phosphatase activity on nucleoside 5'-monophosphates. The chain is 5'-nucleotidase SurE from Verminephrobacter eiseniae (strain EF01-2).